Consider the following 302-residue polypeptide: Ectoine dioxygenase (302 aa).

Position 128 (Q128) interacts with L-ectoine. K134 serves as a coordination point for 2-oxoglutarate. Residues H145, D147, and H246 each contribute to the Fe cation site.

This sequence belongs to the PhyH family. EctD subfamily. Homodimer. Fe(2+) is required as a cofactor.

It catalyses the reaction L-ectoine + 2-oxoglutarate + O2 = 5-hydroxyectoine + succinate + CO2. In terms of biological role, involved in the biosynthesis of 5-hydroxyectoine, called compatible solute, which helps organisms to survive extreme osmotic stress by acting as a highly soluble organic osmolyte. Catalyzes the 2-oxoglutarate-dependent selective hydroxylation of L-ectoine to yield (4S,5S)-5-hydroxyectoine. In Stutzerimonas stutzeri (strain A1501) (Pseudomonas stutzeri), this protein is Ectoine dioxygenase.